Consider the following 187-residue polypeptide: MTGPPGRSDDLNALLRQIARGERDAFAMFYDHTCTRVYGLVARVLRDAGYSEETTQEIYLEVWRTASDYDATKGSPLAWLLTMAHRRAVDRVRAEQAGSQRESRYGAANVDLASDVVADSAIAGDERRRVVECLDGLTDTQRQCIELAYYGGLTYAEVSQRLATNLSTIKSRMRDALRGLRNCLDAS.

The interval 30-96 is sigma-70 factor domain-2; that stretch reads YDHTCTRVYG…RAVDRVRAEQ (67 aa). The Interaction with polymerase core subunit RpoC motif lies at 53–56; that stretch reads ETTQ. The sigma-70 factor domain-4 stretch occupies residues 133 to 182; it reads CLDGLTDTQRQCIELAYYGGLTYAEVSQRLATNLSTIKSRMRDALRGLRN. The segment at residues 155 to 174 is a DNA-binding region (H-T-H motif); the sequence is YAEVSQRLATNLSTIKSRMR.

Belongs to the sigma-70 factor family. ECF subfamily. In terms of assembly, interacts transiently with the RNA polymerase catalytic core formed by RpoA, RpoB, RpoC and RpoZ (2 alpha, 1 beta, 1 beta' and 1 omega subunit) to form the RNA polymerase holoenzyme that can initiate transcription. Interacts (via sigma-70 factor domain 4) with anti-sigma-K factor RskA.

Sigma factors are initiation factors that promote the attachment of RNA polymerase to specific initiation sites and are then released. Extracytoplasmic function (ECF) sigma factors are held in an inactive form by an anti-sigma factor until released by regulated intramembrane proteolysis. The chain is ECF RNA polymerase sigma factor SigK (sigK) from Mycobacterium ulcerans (strain Agy99).